The following is a 250-amino-acid chain: MSHKIAAVCLLMSCLIATAYSAAKVPISIYYESLCPDSAKFITEQVYPAVKGELRDVVELTFVPFGKSQFVTQGSEVTFTCHHGPNECYGNKVHACAIEHIQANSYQVEYTRESLTMDFINCLMKAGKNFPDNVYPGQRCASENHINNWENIKTCANSTEGSVLLRKAGESTMRLKEPLTSVPTILFNEQFDKKVNDRAQVNLVGTICQYVSAPQPRICNQHNGASTPSLASVSAILSSLLGLWFIRSFY.

The N-terminal stretch at 1–21 (MSHKIAAVCLLMSCLIATAYS) is a signal peptide. An N-linked (GlcNAc...) asparagine glycan is attached at Asn-157.

The protein belongs to the GILT family. In terms of processing, conjugated to URM1, a ubiquitin-like protein.

The protein localises to the secreted. Its function is as follows. Involved in the immune response to bacterial infection. The polypeptide is GILT-like protein 1 (Drosophila melanogaster (Fruit fly)).